We begin with the raw amino-acid sequence, 201 residues long: Recombination protein RecR (201 aa).

The segment at 57-72 adopts a C4-type zinc-finger fold; that stretch reads CADCRTFTEQDVCNIC. Residues 81–176 form the Toprim domain; the sequence is GQICVVESPA…EASRIAHGVP (96 aa).

It belongs to the RecR family.

May play a role in DNA repair. It seems to be involved in an RecBC-independent recombinational process of DNA repair. It may act with RecF and RecO. This chain is Recombination protein RecR, found in Salmonella choleraesuis (strain SC-B67).